A 67-amino-acid polypeptide reads, in one-letter code: Small ribosomal subunit protein bS21 (67 aa).

Belongs to the bacterial ribosomal protein bS21 family.

This chain is Small ribosomal subunit protein bS21, found in Rhodospirillum centenum (strain ATCC 51521 / SW).